The chain runs to 209 residues: Hydrogenase expression/formation protein HupM (209 aa).

E21, D67, and H98 together coordinate Ni(2+).

Belongs to the peptidase A31 family.

Not known. Could be involved in the processing of hydrogenase. The protein is Hydrogenase expression/formation protein HupM (hupM) of Azotobacter chroococcum mcd 1.